We begin with the raw amino-acid sequence, 296 residues long: UDP-N-acetylglucosamine transporter TMEM241 (296 aa).

Transmembrane regions (helical) follow at residues Leu7–Val29, Phe32–Val52, Ser67–Ser87, Leu93–Gln113, Thr121–Phe141, Phe146–Ile166, Ile187–Leu207, Phe211–Leu231, Trp250–Leu270, and Thr271–Ser291.

Belongs to the nucleotide-sugar transporter family. SLC35A subfamily.

The protein resides in the golgi apparatus. The protein localises to the cis-Golgi network membrane. Golgi-localized UDP-N-acetylglucosamine (UDP-GlcNAc) transporter that transports UDP-N-acetylglucosamine into Golgi lumen. Contributes to lysosomal targeting of NPC2, a key protein required for lysosomal cholesterol exiting, and that utilizes the mannose-6-phosphate (M6P) modification pathway for its lysosomal targeting. This is UDP-N-acetylglucosamine transporter TMEM241 from Homo sapiens (Human).